The sequence spans 54 residues: Protein GndA (54 aa).

A helical transmembrane segment spans residues 28-50; sequence LFVVIVSFQQRALTSSVPVFLAV.

It localises to the cell inner membrane. The polypeptide is Protein GndA (Escherichia coli (strain K12)).